The chain runs to 116 residues: NADPH-dependent 7-cyano-7-deazaguanine reductase (116 aa).

Cysteine 31 acts as the Thioimide intermediate in catalysis. The Proton donor role is filled by aspartate 38. Substrate-binding positions include 53–55 (VEL) and 72–73 (YE).

The protein belongs to the GTP cyclohydrolase I family. QueF type 1 subfamily.

Its subcellular location is the cytoplasm. The catalysed reaction is 7-aminomethyl-7-carbaguanine + 2 NADP(+) = 7-cyano-7-deazaguanine + 2 NADPH + 3 H(+). It functions in the pathway tRNA modification; tRNA-queuosine biosynthesis. Catalyzes the NADPH-dependent reduction of 7-cyano-7-deazaguanine (preQ0) to 7-aminomethyl-7-deazaguanine (preQ1). This chain is NADPH-dependent 7-cyano-7-deazaguanine reductase, found in Chloroherpeton thalassium (strain ATCC 35110 / GB-78).